The sequence spans 395 residues: Zinc-regulated GTPase metalloprotein activator 1A (395 aa).

The segment at 1-22 (MLPAVGSADEEEDPAEEDCPEL) is disordered. The span at 8–20 (ADEEEDPAEEDCP) shows a compositional bias: acidic residues. The psi-PxLVp motif signature appears at 17–24 (EDCPELVP). 49 to 56 (GYLGAGKT) contacts GTP. Residues Cys-107, Cys-109, and Cys-110 each coordinate Zn(2+). Positions 107-110 (CLCC) match the CXCC motif motif. GTP contacts are provided by residues 110-114 (CSVKD) and 203-206 (NKTD). The 104-residue stretch at 274-377 (IVTITFEVPG…ILKQLFIATV (104 aa)) folds into the CobW C-terminal domain.

This sequence belongs to the SIMIBI class G3E GTPase family. ZNG1 subfamily. In terms of tissue distribution, ubiquitously expressed. Up-regulated in cultured astrocytes treated with dopamine.

The protein localises to the nucleus. The catalysed reaction is GTP + H2O = GDP + phosphate + H(+). Zinc chaperone that directly transfers zinc cofactor to target metalloproteins, thereby activating them. Catalyzes zinc insertion into the active site of methionine aminopeptidase METAP1, which function to cleave the initiator methionine from polypeptides during or after protein translation. Mechanistically, the N-terminal psi-PxLVp motif binds to the C6H2-type zinc finger of inactive form of METAP1. After formation of the docked complex, zinc is transferred from the CXCC motif in the GTPase domain of ZNG1A to the zinc binding site in the peptidase domain of METAP1 in a process requiring GTP hydrolysis. GTP/GDP exchange is required for release of active METAP1. This chain is Zinc-regulated GTPase metalloprotein activator 1A, found in Homo sapiens (Human).